The primary structure comprises 134 residues: NAD(P)H-quinone oxidoreductase subunit 3 (134 aa).

Transmembrane regions (helical) follow at residues 20–40 (GYDA…LALV), 78–98 (MFAL…PWAV), and 103–123 (LGLL…VALA).

It belongs to the complex I subunit 3 family. In terms of assembly, NDH-1 can be composed of about 15 different subunits; different subcomplexes with different compositions have been identified which probably have different functions.

The protein resides in the cellular thylakoid membrane. It catalyses the reaction a plastoquinone + NADH + (n+1) H(+)(in) = a plastoquinol + NAD(+) + n H(+)(out). The enzyme catalyses a plastoquinone + NADPH + (n+1) H(+)(in) = a plastoquinol + NADP(+) + n H(+)(out). Functionally, NDH-1 shuttles electrons from an unknown electron donor, via FMN and iron-sulfur (Fe-S) centers, to quinones in the respiratory and/or the photosynthetic chain. The immediate electron acceptor for the enzyme in this species is believed to be plastoquinone. Couples the redox reaction to proton translocation, and thus conserves the redox energy in a proton gradient. Cyanobacterial NDH-1 also plays a role in inorganic carbon-concentration. In Prochlorococcus marinus (strain MIT 9303), this protein is NAD(P)H-quinone oxidoreductase subunit 3.